Reading from the N-terminus, the 178-residue chain is 2-C-methyl-D-erythritol 2,4-cyclodiphosphate synthase (178 aa).

Aspartate 24, histidine 26, and histidine 61 together coordinate a divalent metal cation. 24 to 26 contributes to the 4-CDP-2-C-methyl-D-erythritol 2-phosphate binding site; that stretch reads DSH. 150-153 serves as a coordination point for 4-CDP-2-C-methyl-D-erythritol 2-phosphate; it reads TSGE.

Belongs to the IspF family. In terms of assembly, homotrimer. The cofactor is a divalent metal cation.

It carries out the reaction 4-CDP-2-C-methyl-D-erythritol 2-phosphate = 2-C-methyl-D-erythritol 2,4-cyclic diphosphate + CMP. It functions in the pathway isoprenoid biosynthesis; isopentenyl diphosphate biosynthesis via DXP pathway; isopentenyl diphosphate from 1-deoxy-D-xylulose 5-phosphate: step 4/6. Its function is as follows. Involved in the biosynthesis of isopentenyl diphosphate (IPP) and dimethylallyl diphosphate (DMAPP), two major building blocks of isoprenoid compounds. Catalyzes the conversion of 4-diphosphocytidyl-2-C-methyl-D-erythritol 2-phosphate (CDP-ME2P) to 2-C-methyl-D-erythritol 2,4-cyclodiphosphate (ME-CPP) with a corresponding release of cytidine 5-monophosphate (CMP). The protein is 2-C-methyl-D-erythritol 2,4-cyclodiphosphate synthase of Chlamydia trachomatis serovar L2 (strain ATCC VR-902B / DSM 19102 / 434/Bu).